Consider the following 227-residue polypeptide: 2,3-bisphosphoglycerate-dependent phosphoglycerate mutase (227 aa).

Substrate is bound by residues 7-14 (RHGFSEWN), 20-21 (TG), R59, 86-89 (ERHY), K97, 113-114 (RR), and 182-183 (GN). H8 serves as the catalytic Tele-phosphohistidine intermediate. The active-site Proton donor/acceptor is E86.

The protein belongs to the phosphoglycerate mutase family. BPG-dependent PGAM subfamily. Homodimer.

The enzyme catalyses (2R)-2-phosphoglycerate = (2R)-3-phosphoglycerate. It functions in the pathway carbohydrate degradation; glycolysis; pyruvate from D-glyceraldehyde 3-phosphate: step 3/5. Catalyzes the interconversion of 2-phosphoglycerate and 3-phosphoglycerate. The polypeptide is 2,3-bisphosphoglycerate-dependent phosphoglycerate mutase (Haemophilus influenzae (strain PittGG)).